The primary structure comprises 230 residues: Cytochrome c oxidase subunit 2 (230 aa).

Residues 1–26 (MATPAQLGLMDAASPVMEEMIYFHDH) are Mitochondrial intermembrane-facing. A helical membrane pass occupies residues 27–48 (VMLVLILITCLIFYSMLVLISS). The Mitochondrial matrix portion of the chain corresponds to 49 to 62 (KYIYRFLTDGHVIE). A helical membrane pass occupies residues 63–82 (TVWTVIPAIILVVVALPSLK). Topologically, residues 83–230 (LLYLTDELDN…GWCDMMLDEE (148 aa)) are mitochondrial intermembrane. Positions 161, 196, 198, 200, 204, and 207 each coordinate Cu cation. E198 is a Mg(2+) binding site.

The protein belongs to the cytochrome c oxidase subunit 2 family. In terms of assembly, component of the cytochrome c oxidase (complex IV, CIV), a multisubunit enzyme composed of a catalytic core of 3 subunits and several supernumerary subunits. The complex exists as a monomer or a dimer and forms supercomplexes (SCs) in the inner mitochondrial membrane with ubiquinol-cytochrome c oxidoreductase (cytochrome b-c1 complex, complex III, CIII). The cofactor is Cu cation.

It localises to the mitochondrion inner membrane. It carries out the reaction 4 Fe(II)-[cytochrome c] + O2 + 8 H(+)(in) = 4 Fe(III)-[cytochrome c] + 2 H2O + 4 H(+)(out). In terms of biological role, component of the cytochrome c oxidase, the last enzyme in the mitochondrial electron transport chain which drives oxidative phosphorylation. The respiratory chain contains 3 multisubunit complexes succinate dehydrogenase (complex II, CII), ubiquinol-cytochrome c oxidoreductase (cytochrome b-c1 complex, complex III, CIII) and cytochrome c oxidase (complex IV, CIV), that cooperate to transfer electrons derived from NADH and succinate to molecular oxygen, creating an electrochemical gradient over the inner membrane that drives transmembrane transport and the ATP synthase. Cytochrome c oxidase is the component of the respiratory chain that catalyzes the reduction of oxygen to water. Electrons originating from reduced cytochrome c in the intermembrane space (IMS) are transferred via the dinuclear copper A center (CU(A)) of subunit 2 and heme A of subunit 1 to the active site in subunit 1, a binuclear center (BNC) formed by heme A3 and copper B (CU(B)). The BNC reduces molecular oxygen to 2 water molecules using 4 electrons from cytochrome c in the IMS and 4 protons from the mitochondrial matrix. The protein is Cytochrome c oxidase subunit 2 (COII) of Branchiostoma floridae (Florida lancelet).